We begin with the raw amino-acid sequence, 962 residues long: Nonribosomal peptide synthetase atqA (962 aa).

The adenylation (A) domain stretch occupies residues 34–462 (AANTTEGIIA…DGRTKEMVNI (429 aa)). The Carrier domain occupies 595-672 (SAEEATILSI…GLCQRIAATS (78 aa)). The residue at position 630 (Ser630) is an O-(pantetheine 4'-phosphoryl)serine. Positions 694 to 951 (PLWLVHPGVG…KPEYVANFAK (258 aa)) are thioesterase (TE) domain.

This sequence belongs to the NRP synthetase family.

Its pathway is secondary metabolite biosynthesis. Functionally, nonribosomal peptide synthetase; part of the gene cluster that mediates the biosynthesis of asterriquinone CT5, a natural product that displays potential biological activities including antitumor and insulin mimic activities. The nonribosomal peptide synthetase atqA is responsible for the production of the benzoquinone derivative didemethylasterriquinone D (DDAQ D), via condensation of 2 indole pyruvic acid (IPA) molecules. The symmetric connectivity of the 2 IPA molecules is thought to arise by head-to-tail dual Claisen condensations catalyzed by the TE domain of atqA. DDAQ D represents the core structure of asterriquinones and is further modified by yet unidentified tailoring enzymes to lead to the production of asterriquinone CT5. This chain is Nonribosomal peptide synthetase atqA, found in Aspergillus terreus (strain NIH 2624 / FGSC A1156).